The sequence spans 243 residues: Probable ubiquitin-conjugating enzyme E2 33 (243 aa).

Positions 5-162 constitute a UBC core domain; it reads ACIKRLQKEY…FPEYVEKYSQ (158 aa). Catalysis depends on C87, which acts as the Glycyl thioester intermediate. Positions 168-197 are disordered; that stretch reads EEAATQQTTTSENQDFPQKDNAKVESEKSV. A compositionally biased stretch (basic and acidic residues) spans 184–197; it reads PQKDNAKVESEKSV. A helical transmembrane segment spans residues 220 to 240; that stretch reads LPGWIVLLLVSIVGVVMALPL.

This sequence belongs to the ubiquitin-conjugating enzyme family.

It is found in the membrane. The catalysed reaction is S-ubiquitinyl-[E1 ubiquitin-activating enzyme]-L-cysteine + [E2 ubiquitin-conjugating enzyme]-L-cysteine = [E1 ubiquitin-activating enzyme]-L-cysteine + S-ubiquitinyl-[E2 ubiquitin-conjugating enzyme]-L-cysteine.. Its pathway is protein modification; protein ubiquitination. Its function is as follows. Accepts the ubiquitin from the E1 complex and catalyzes its covalent attachment to other proteins. In Arabidopsis thaliana (Mouse-ear cress), this protein is Probable ubiquitin-conjugating enzyme E2 33 (UBC33).